The primary structure comprises 248 residues: Mannose-binding protein C (248 aa).

The first 20 residues, 1-20, serve as a signal peptide directing secretion; sequence MSLIPSLSLLLMSMVAASYS. A Collagen-like domain is found at 42–99; that stretch reads GINGFPGKDGRDGTKGEKGEPGQGLRGLQGPPGKLGPPGNPGPSGSPGPKGQKGDPGK. Positions 43–107 are disordered; it reads INGFPGKDGR…GKSPDCDSSL (65 aa). A 4-hydroxyproline modification is found at Pro47. Residues 49–61 show a composition bias toward basic and acidic residues; that stretch reads KDGRDGTKGEKGE. 4 positions are modified to 4-hydroxyproline: Pro73, Pro79, Pro82, and Pro88. A compositionally biased stretch (pro residues) spans 75 to 87; sequence KLGPPGNPGPSGS. The segment covering 93-102 has biased composition (basic and acidic residues); it reads QKGDPGKSPD. Residues 112–130 adopt a coiled-coil conformation; sequence RKALQTEMARIKKWLTFSL. One can recognise a C-type lectin domain in the interval 134–245; the sequence is VGNKFFLTNG…CSSSHLAVCE (112 aa). 2 disulfides stabilise this stretch: Cys155/Cys244 and Cys222/Cys236.

As to quaternary structure, oligomeric complex of 3 or more homotrimers. Interacts with MASP1 and MASP2. Interacts with MEP1A and MEP1B and may inhibit their catalytic activity. Hydroxylation on proline residues within the sequence motif, GXPG, is most likely to be 4-hydroxy as this fits the requirement for 4-hydroxylation in vertebrates.

The protein resides in the secreted. Functionally, calcium-dependent lectin involved in innate immune defense. Binds mannose, fucose and N-acetylglucosamine on different microorganisms and activates the lectin complement pathway. Binds to late apoptotic cells, as well as to apoptotic blebs and to necrotic cells, but not to early apoptotic cells, facilitating their uptake by macrophages. The sequence is that of Mannose-binding protein C (MBL2) from Hylobates lar (Lar gibbon).